Here is a 377-residue protein sequence, read N- to C-terminus: Opsin, blue-sensitive (377 aa).

Residues 1-56 are Extracellular-facing; the sequence is MLLHNKTLAGKALAFIAEEGYVPSMREKFLGWNVPPEYSDLVHPHWRAFPAPGKHF. N5 is a glycosylation site (N-linked (GlcNAc...) asparagine). A helical membrane pass occupies residues 57–81; that stretch reads HIGLAIIYSMLLIMSLVGNCCVIWI. The Cytoplasmic segment spans residues 82 to 93; that stretch reads FSTSKSLRTPSN. The chain crosses the membrane as a helical span at residues 94-119; sequence MFIVSLAIFDIIMAFEMPMLVISSFM. Residues 120-132 are Extracellular-facing; sequence ERMIGWEIGCDVY. C129 and C206 form a disulfide bridge. The chain crosses the membrane as a helical span at residues 133–152; the sequence is SVFGSISGMGQAMTNAAIAF. The Cytoplasmic portion of the chain corresponds to 153–170; the sequence is DRYRTISCPIDGRLNSKQ. The chain crosses the membrane as a helical span at residues 171–195; the sequence is AAVIIAFTWFWVTPFTVLPLLKVWG. The Extracellular portion of the chain corresponds to 196–219; that stretch reads RYTTEGFLTTCSFDFLTDDEDTKV. Residues 220–247 form a helical membrane-spanning segment; it reads FVTCIFIWAYVIPLIFIILFYSRLLSSI. Topologically, residues 248 to 282 are cytoplasmic; that stretch reads RNHEKMLREQAKKMNVKSLVSNQDKERSAEVRIAK. The helical transmembrane segment at 283-306 threads the bilayer; it reads VAFTIFFLFLLAWTPYATVALIGV. At 307-314 the chain is on the extracellular side; that stretch reads YGNRELLT. The chain crosses the membrane as a helical span at residues 315 to 339; it reads PVSTMLPAVFAKTVSCIDPWIYAIN. An N6-(retinylidene)lysine modification is found at K326. The Cytoplasmic segment spans residues 340-377; sequence HPRYRQELQKRCKWMGIHEPETTSDATSAQTEKIKTDE.

It belongs to the G-protein coupled receptor 1 family. Opsin subfamily. Post-translationally, phosphorylated on some or all of the serine and threonine residues present in the C-terminal region. In terms of tissue distribution, expressed in the dorsal region of the retina and sparsely expressed in the ventral region.

The protein localises to the membrane. In terms of biological role, visual pigments are the light-absorbing molecules that mediate vision. They consist of an apoprotein, opsin, covalently linked to 11-cis-retinal. The sequence is that of Opsin, blue-sensitive (BLOP) from Apis mellifera (Honeybee).